Consider the following 38-residue polypeptide: Cytochrome b6-f complex subunit 5 (38 aa).

A helical transmembrane segment spans residues 5-25 (LVLGLVMGLVPITLAGLFVAA).

The protein belongs to the PetG family. The 4 large subunits of the cytochrome b6-f complex are cytochrome b6, subunit IV (17 kDa polypeptide, PetD), cytochrome f and the Rieske protein, while the 4 small subunits are PetG, PetL, PetM and PetN. The complex functions as a dimer.

It is found in the cellular thylakoid membrane. Component of the cytochrome b6-f complex, which mediates electron transfer between photosystem II (PSII) and photosystem I (PSI), cyclic electron flow around PSI, and state transitions. PetG is required for either the stability or assembly of the cytochrome b6-f complex. In Gloeothece citriformis (strain PCC 7424) (Cyanothece sp. (strain PCC 7424)), this protein is Cytochrome b6-f complex subunit 5.